The following is a 1072-amino-acid chain: Error-prone DNA polymerase (1072 aa).

It belongs to the DNA polymerase type-C family. DnaE2 subfamily.

Its subcellular location is the cytoplasm. The catalysed reaction is DNA(n) + a 2'-deoxyribonucleoside 5'-triphosphate = DNA(n+1) + diphosphate. Its function is as follows. DNA polymerase involved in damage-induced mutagenesis and translesion synthesis (TLS). It is not the major replicative DNA polymerase. This chain is Error-prone DNA polymerase, found in Burkholderia pseudomallei (strain K96243).